The primary structure comprises 93 residues: Small ribosomal subunit protein uS19 (93 aa).

This sequence belongs to the universal ribosomal protein uS19 family.

Functionally, protein S19 forms a complex with S13 that binds strongly to the 16S ribosomal RNA. In Geobacter sulfurreducens (strain ATCC 51573 / DSM 12127 / PCA), this protein is Small ribosomal subunit protein uS19.